We begin with the raw amino-acid sequence, 367 residues long: GTP cyclohydrolase FolE2 (367 aa).

The protein belongs to the GTP cyclohydrolase IV family.

It carries out the reaction GTP + H2O = 7,8-dihydroneopterin 3'-triphosphate + formate + H(+). Its pathway is cofactor biosynthesis; 7,8-dihydroneopterin triphosphate biosynthesis; 7,8-dihydroneopterin triphosphate from GTP: step 1/1. Functionally, converts GTP to 7,8-dihydroneopterin triphosphate. The chain is GTP cyclohydrolase FolE2 from Ruegeria pomeroyi (strain ATCC 700808 / DSM 15171 / DSS-3) (Silicibacter pomeroyi).